We begin with the raw amino-acid sequence, 31 residues long: Mycofactocin precursor peptide (31 aa).

The protein belongs to the mycofactocin precursor peptide family. Post-translationally, the post-translational modifications that lead to mycofactocin involve oxidative decarboxylation of the C-terminal tyrosine residue catalyzed by MftC, introduction of a tyramine-valine cross-link, removal of the modified C-terminal dipeptide by MftE. The released dipeptide then undergoes oxidative deamination by MftD, glycosylation by MftF and methylation by an unknown enzyme.

Functionally, precursor peptide that leads to mycofactocin (MFT) after extensive post-translational modifications by enzymes encoded by adjacent genes. Mycofactocin acts as a redox cofactor of nicotinamide-dependent oxidoreductases encoded in the same locus. Is required for the in vivo ethanol assimilation in M.smegmatis. The chain is Mycofactocin precursor peptide from Mycolicibacterium smegmatis (strain ATCC 700084 / mc(2)155) (Mycobacterium smegmatis).